The following is a 159-amino-acid chain: SsrA-binding protein (159 aa).

Positions 137-159 (DKRETEKQRDWSREKGRLLKERG) are disordered.

It belongs to the SmpB family.

It localises to the cytoplasm. Required for rescue of stalled ribosomes mediated by trans-translation. Binds to transfer-messenger RNA (tmRNA), required for stable association of tmRNA with ribosomes. tmRNA and SmpB together mimic tRNA shape, replacing the anticodon stem-loop with SmpB. tmRNA is encoded by the ssrA gene; the 2 termini fold to resemble tRNA(Ala) and it encodes a 'tag peptide', a short internal open reading frame. During trans-translation Ala-aminoacylated tmRNA acts like a tRNA, entering the A-site of stalled ribosomes, displacing the stalled mRNA. The ribosome then switches to translate the ORF on the tmRNA; the nascent peptide is terminated with the 'tag peptide' encoded by the tmRNA and targeted for degradation. The ribosome is freed to recommence translation, which seems to be the essential function of trans-translation. The sequence is that of SsrA-binding protein from Mesorhizobium japonicum (strain LMG 29417 / CECT 9101 / MAFF 303099) (Mesorhizobium loti (strain MAFF 303099)).